The sequence spans 349 residues: Small ribosomal subunit protein uS2 (349 aa).

Belongs to the universal ribosomal protein uS2 family.

The protein is Small ribosomal subunit protein uS2 of Methylobacterium sp. (strain 4-46).